Here is a 145-residue protein sequence, read N- to C-terminus: D-aminoacyl-tRNA deacylase (145 aa).

Positions 137–138 (GP) match the Gly-cisPro motif, important for rejection of L-amino acids motif.

Belongs to the DTD family. As to quaternary structure, homodimer.

It is found in the cytoplasm. It carries out the reaction glycyl-tRNA(Ala) + H2O = tRNA(Ala) + glycine + H(+). The catalysed reaction is a D-aminoacyl-tRNA + H2O = a tRNA + a D-alpha-amino acid + H(+). In terms of biological role, an aminoacyl-tRNA editing enzyme that deacylates mischarged D-aminoacyl-tRNAs. Also deacylates mischarged glycyl-tRNA(Ala), protecting cells against glycine mischarging by AlaRS. Acts via tRNA-based rather than protein-based catalysis; rejects L-amino acids rather than detecting D-amino acids in the active site. By recycling D-aminoacyl-tRNA to D-amino acids and free tRNA molecules, this enzyme counteracts the toxicity associated with the formation of D-aminoacyl-tRNA entities in vivo and helps enforce protein L-homochirality. The chain is D-aminoacyl-tRNA deacylase from Shigella dysenteriae serotype 1 (strain Sd197).